The chain runs to 66 residues: Large ribosomal subunit protein uL29 (66 aa).

It belongs to the universal ribosomal protein uL29 family.

The protein is Large ribosomal subunit protein uL29 of Bartonella henselae (strain ATCC 49882 / DSM 28221 / CCUG 30454 / Houston 1) (Rochalimaea henselae).